Consider the following 355-residue polypeptide: 3-dehydroquinate synthase (355 aa).

Residues 71 to 76 (EGEASK), 105 to 109 (GVVGD), 129 to 130 (TS), K142, and K151 contribute to the NAD(+) site. Zn(2+) is bound by residues E184, H246, and H263.

The protein belongs to the sugar phosphate cyclases superfamily. Dehydroquinate synthase family. Co(2+) serves as cofactor. The cofactor is Zn(2+). NAD(+) is required as a cofactor.

It localises to the cytoplasm. It catalyses the reaction 7-phospho-2-dehydro-3-deoxy-D-arabino-heptonate = 3-dehydroquinate + phosphate. Its pathway is metabolic intermediate biosynthesis; chorismate biosynthesis; chorismate from D-erythrose 4-phosphate and phosphoenolpyruvate: step 2/7. Catalyzes the conversion of 3-deoxy-D-arabino-heptulosonate 7-phosphate (DAHP) to dehydroquinate (DHQ). The polypeptide is 3-dehydroquinate synthase (Streptococcus thermophilus (strain ATCC BAA-491 / LMD-9)).